A 298-amino-acid polypeptide reads, in one-letter code: uncharacterized protein (298 aa).

This is an uncharacterized protein from Orgyia pseudotsugata multicapsid polyhedrosis virus (OpMNPV).